The chain runs to 498 residues: ATP synthase subunit beta, chloroplastic (498 aa).

172–179 is an ATP binding site; the sequence is GGAGVGKT.

The protein belongs to the ATPase alpha/beta chains family. F-type ATPases have 2 components, CF(1) - the catalytic core - and CF(0) - the membrane proton channel. CF(1) has five subunits: alpha(3), beta(3), gamma(1), delta(1), epsilon(1). CF(0) has four main subunits: a(1), b(1), b'(1) and c(9-12).

The protein resides in the plastid. It is found in the chloroplast thylakoid membrane. The catalysed reaction is ATP + H2O + 4 H(+)(in) = ADP + phosphate + 5 H(+)(out). Its function is as follows. Produces ATP from ADP in the presence of a proton gradient across the membrane. The catalytic sites are hosted primarily by the beta subunits. This Illicium oligandrum (Star anise) protein is ATP synthase subunit beta, chloroplastic.